Reading from the N-terminus, the 587-residue chain is D-lactate dehydrogenase [cytochrome] 1, mitochondrial (587 aa).

Residues 146–327 (SPEQRPRIIL…TEATVKCHVK (182 aa)) enclose the FAD-binding PCMH-type domain.

Belongs to the FAD-binding oxidoreductase/transferase type 4 family. The cofactor is FAD.

Its subcellular location is the mitochondrion inner membrane. The enzyme catalyses (R)-lactate + 2 Fe(III)-[cytochrome c] = 2 Fe(II)-[cytochrome c] + pyruvate + 2 H(+). Its function is as follows. Catalyzes the stereospecific oxidation of D-lactate to pyruvate. In Saccharomyces cerevisiae (strain ATCC 204508 / S288c) (Baker's yeast), this protein is D-lactate dehydrogenase [cytochrome] 1, mitochondrial.